The sequence spans 350 residues: Zona pellucida-binding protein 1 (350 aa).

The signal sequence occupies residues 1–38; sequence MEASAPDRARRGWRRARAAASPLSRAAVVLLLSALVLR. Residues Asn113, Asn186, and Asn339 are each glycosylated (N-linked (GlcNAc...) asparagine).

It belongs to the zona pellucida-binding protein Sp38 family. In terms of processing, N-glycosylated. As to expression, expressed in testis. Detected in sperm cells.

The protein resides in the cytoplasmic vesicle. It is found in the secretory vesicle. Its subcellular location is the acrosome. The protein localises to the secreted. It localises to the acrosome membrane. Plays a role in acrosome compaction and sperm morphogenesis. Is implicated in sperm-oocyte interaction during fertilization. In Sus scrofa (Pig), this protein is Zona pellucida-binding protein 1 (ZPBP).